A 446-amino-acid polypeptide reads, in one-letter code: MEMEQEKMTMNKELSPDAAAYCCSACHGDETWSYNHPIRGRAKSRSLSASPALGSTKEFRRTRSLHGPCPVTTFGPKACVLQNPQTIMHIQDPASQRLTWNKSPKSVLVIKKMRDASLLQPFKELCTHLMEENMIVYVEKKVLEDPAIASDESFGAVKKKFCTFREDYDDISNQIDFIICLGGDGTLLYASSLFQGSVPPVMAFHLGSLGFLTPFSFENFQSQVTQVIEGNAAVVLRSRLKVRVVKELRGKKTAVHNGLGENGSQAAGLDMDVGKQAMQYQVLNEVVIDRGPSSYLSNVDVYLDGHLITTVQGDGVIVSTPTGSTAYAAAAGASMIHPNVPAIMITPICPHSLSFRPIVVPAGVELKIMLSPEARNTAWVSFDGRKRQEIRHGDSISITTSCYPLPSICVRDPVSDWFESLAQCLHWNVRKKQAHFEEEEEEEEEG.

5 positions are modified to phosphoserine: serine 46, serine 48, serine 50, serine 55, and serine 64.

This sequence belongs to the NAD kinase family. It depends on a divalent metal cation as a cofactor. In terms of tissue distribution, widely expressed but not detected in skeletal muscle.

It carries out the reaction NAD(+) + ATP = ADP + NADP(+) + H(+). This chain is NAD kinase (NADK), found in Homo sapiens (Human).